A 142-amino-acid chain; its full sequence is Small heat shock protein IbpB (142 aa).

The sHSP domain occupies 26-137; sequence AGESQSFPPY…AAQRIAISER (112 aa).

This sequence belongs to the small heat shock protein (HSP20) family. In terms of assembly, homodimer. Forms homomultimers of about 100-150 subunits at optimal growth temperatures. Conformation changes to oligomers at high temperatures or high ionic concentrations. The decrease in size of the multimers is accompanied by an increase in chaperone activity.

It is found in the cytoplasm. Functionally, associates with aggregated proteins, together with IbpA, to stabilize and protect them from irreversible denaturation and extensive proteolysis during heat shock and oxidative stress. Aggregated proteins bound to the IbpAB complex are more efficiently refolded and reactivated by the ATP-dependent chaperone systems ClpB and DnaK/DnaJ/GrpE. Its activity is ATP-independent. In Escherichia coli O7:K1 (strain IAI39 / ExPEC), this protein is Small heat shock protein IbpB.